The sequence spans 468 residues: MAALSCYPPEWDDDERMSFLFSAFKQTRDVNTSDWDGKMKFWIPLILKHARAQGLLSISLSQLERDFRRKGFAPLGLRIVIQEMMRQGTLRKESDYVSNVSSGWLSWGMRQLVIRPLRWTIGTVLGSQMGPDEPLVIPEIIKERAALVLQRYQSSPLRALPLLSEEEVRTLCAEICPNPSALNLVLLQLQGDKKICVLERAGKKLVKFVRVSVGQVDPISESDLGIYELQQSEKLLSERLQSAGEESDRLTEEARTYNRAGNKHQALRCLRKRKLLERRITELQNKQDTVQGILERIAAAETDRKVVSAYQMGVSALKLALKDVTMEKAESIVDQIQEYCDLQDDLSQTLASVSDADIDSEDLEKELNDILQNKEMIVDLPDVPSGPVVISPQRPTEWETDQDIDSEDLEKELNDILQKEEMIVDLPDVPSGPVVISPQRPTEWKTDQASRSPADGSFSRSVPEPVLQ.

Coiled-coil stretches lie at residues E233–D303 and V353–D379. A disordered region spans residues D428–Q468.

The protein belongs to the SNF7 family.

The protein localises to the cytoplasm. It is found in the nucleus envelope. Its function is as follows. ESCRT-III-like protein required to recruit the ESCRT-III complex to the nuclear envelope during late anaphase. Together with SPAST, the ESCRT-III complex promotes nuclear envelope sealing and mitotic spindle disassembly during late anaphase. Plays a role in the endosomal sorting pathway. The sequence is that of Charged multivesicular body protein 7 (chmp7) from Xenopus tropicalis (Western clawed frog).